Here is a 353-residue protein sequence, read N- to C-terminus: NADH-quinone oxidoreductase subunit H (353 aa).

Helical transmembrane passes span 8–28 (LLVY…IFIW), 75–95 (GVFW…FAAI), 108–128 (IGIL…FMAG), 148–168 (VSYE…TGSL), 179–199 (VPFI…AMAE), 229–249 (LFYL…TTLF), 258–278 (LHPV…IIWV), 297–317 (FLLP…LIAP), and 319–339 (INTA…VLLF).

It belongs to the complex I subunit 1 family. NDH-1 is composed of 14 different subunits. Subunits NuoA, H, J, K, L, M, N constitute the membrane sector of the complex.

The protein localises to the cell membrane. The catalysed reaction is a quinone + NADH + 5 H(+)(in) = a quinol + NAD(+) + 4 H(+)(out). NDH-1 shuttles electrons from NADH, via FMN and iron-sulfur (Fe-S) centers, to quinones in the respiratory chain. The immediate electron acceptor for the enzyme in this species is believed to be ubiquinone. Couples the redox reaction to proton translocation (for every two electrons transferred, four hydrogen ions are translocated across the cytoplasmic membrane), and thus conserves the redox energy in a proton gradient. This subunit may bind ubiquinone. In Dehalococcoides mccartyi (strain CBDB1), this protein is NADH-quinone oxidoreductase subunit H.